We begin with the raw amino-acid sequence, 266 residues long: MKQKARVIVAGALGKMGKETLKAIAGDEELELIAAVDIKAKGEKVADLIGIAGLDISLENDLDEVLENYQPDVLVDFTNPQAVFNNARSALKIGVFCVIGTTGLNEIEIKELEKLAGEKQVGVAIIPNFAIGAVLMMKFASEAAKYFPEVEIIELHHDQKMDAPSGTAIKTAEMINANRPLRPPRNVREFEKIAGCRGGDLGQVRIHSVRLPGLIAHQEVIFGGAGQGLKIRHDSFDRAGFMPGVVMVIKKILQRKELVYGMENLL.

11–16 lines the NAD(+) pocket; sequence GALGKM. Lysine 39 serves as a coordination point for NADP(+). 100-102 serves as a coordination point for NAD(+); it reads GTT. Catalysis depends on histidine 156, which acts as the Proton donor/acceptor. Histidine 157 is a (S)-2,3,4,5-tetrahydrodipicolinate binding site. The Proton donor role is filled by lysine 160. A (S)-2,3,4,5-tetrahydrodipicolinate-binding site is contributed by 166–167; the sequence is GT.

It belongs to the DapB family.

The protein resides in the cytoplasm. It carries out the reaction (S)-2,3,4,5-tetrahydrodipicolinate + NAD(+) + H2O = (2S,4S)-4-hydroxy-2,3,4,5-tetrahydrodipicolinate + NADH + H(+). It catalyses the reaction (S)-2,3,4,5-tetrahydrodipicolinate + NADP(+) + H2O = (2S,4S)-4-hydroxy-2,3,4,5-tetrahydrodipicolinate + NADPH + H(+). It functions in the pathway amino-acid biosynthesis; L-lysine biosynthesis via DAP pathway; (S)-tetrahydrodipicolinate from L-aspartate: step 4/4. Functionally, catalyzes the conversion of 4-hydroxy-tetrahydrodipicolinate (HTPA) to tetrahydrodipicolinate. This Syntrophomonas wolfei subsp. wolfei (strain DSM 2245B / Goettingen) protein is 4-hydroxy-tetrahydrodipicolinate reductase.